The following is a 79-amino-acid chain: Large ribosomal subunit protein bL28 (79 aa).

Positions 1-26 (MAKVCQVTGKRPQSGNNVSHANKKTN) are disordered. A compositionally biased stretch (polar residues) spans 11 to 20 (RPQSGNNVSH).

This sequence belongs to the bacterial ribosomal protein bL28 family.

The chain is Large ribosomal subunit protein bL28 from Coxiella burnetii (strain CbuK_Q154) (Coxiella burnetii (strain Q154)).